Here is a 362-residue protein sequence, read N- to C-terminus: tRNA/tmRNA (uracil-C(5))-methyltransferase (362 aa).

Positions 182, 210, 215, 231, and 293 each coordinate S-adenosyl-L-methionine. Residue Cys318 is the Nucleophile of the active site. Glu352 serves as the catalytic Proton acceptor.

The protein belongs to the class I-like SAM-binding methyltransferase superfamily. RNA M5U methyltransferase family. TrmA subfamily.

The enzyme catalyses uridine(54) in tRNA + S-adenosyl-L-methionine = 5-methyluridine(54) in tRNA + S-adenosyl-L-homocysteine + H(+). The catalysed reaction is uridine(341) in tmRNA + S-adenosyl-L-methionine = 5-methyluridine(341) in tmRNA + S-adenosyl-L-homocysteine + H(+). Functionally, dual-specificity methyltransferase that catalyzes the formation of 5-methyluridine at position 54 (m5U54) in all tRNAs, and that of position 341 (m5U341) in tmRNA (transfer-mRNA). This chain is tRNA/tmRNA (uracil-C(5))-methyltransferase, found in Neisseria gonorrhoeae (strain ATCC 700825 / FA 1090).